Here is a 368-residue protein sequence, read N- to C-terminus: Glutamate 5-kinase (368 aa).

K13 provides a ligand contact to ATP. The substrate site is built by S54, D141, and N153. ATP is bound at residue S173 to D174. Residues R278–P355 form the PUA domain.

It belongs to the glutamate 5-kinase family.

Its subcellular location is the cytoplasm. It catalyses the reaction L-glutamate + ATP = L-glutamyl 5-phosphate + ADP. It participates in amino-acid biosynthesis; L-proline biosynthesis; L-glutamate 5-semialdehyde from L-glutamate: step 1/2. Catalyzes the transfer of a phosphate group to glutamate to form L-glutamate 5-phosphate. This Dinoroseobacter shibae (strain DSM 16493 / NCIMB 14021 / DFL 12) protein is Glutamate 5-kinase.